A 340-amino-acid chain; its full sequence is Phosphate acyltransferase (340 aa).

Belongs to the PlsX family. Homodimer. Probably interacts with PlsY.

Its subcellular location is the cytoplasm. The catalysed reaction is a fatty acyl-[ACP] + phosphate = an acyl phosphate + holo-[ACP]. It functions in the pathway lipid metabolism; phospholipid metabolism. Functionally, catalyzes the reversible formation of acyl-phosphate (acyl-PO(4)) from acyl-[acyl-carrier-protein] (acyl-ACP). This enzyme utilizes acyl-ACP as fatty acyl donor, but not acyl-CoA. In Nostoc punctiforme (strain ATCC 29133 / PCC 73102), this protein is Phosphate acyltransferase.